The sequence spans 638 residues: Octopamine receptor 1 (638 aa).

Topologically, residues 1–28 (MSRDIFMKRLRLHLLFDEVAMVTHIVGD) are extracellular. The chain crosses the membrane as a helical span at residues 29–53 (VLSSVLLCAVVLLVLVGNTLVVAAV). Residues 54–64 (ATSRKLRTVTN) lie on the Cytoplasmic side of the membrane. Residues 65 to 87 (VFIVNLACADLLLGVLVLPFSAV) traverse the membrane as a helical segment. Topologically, residues 88–102 (NEIKDVWIFGHVWCQ) are extracellular. The cysteines at positions 101 and 230 are disulfide-linked. A helical transmembrane segment spans residues 103 to 124 (VWLAVDVWLCTASILNLCCISL). The Cytoplasmic portion of the chain corresponds to 125 to 147 (DRYLAITRPIRYPGLMSAKRAKT). A helical transmembrane segment spans residues 148–167 (LVAGVWLFSFVICCPPLIGW). The Extracellular portion of the chain corresponds to 168-239 (NDGGDGIMDY…CELTNSRGYR (72 aa)). Residues Asn178, Asn207, and Asn215 are each glycosylated (N-linked (GlcNAc...) asparagine). Residues 240–259 (IYAALGSFFIPMLVMVFFYL) form a helical membrane-spanning segment. The Cytoplasmic portion of the chain corresponds to 260–520 (QIYRAAVKTI…FNREKKAAKT (261 aa)). Residues 521-545 (LAIIVGAFIMCWMPFFTIYLVGAFC) traverse the membrane as a helical segment. Residues 546-551 (ENCISP) are Extracellular-facing. A helical transmembrane segment spans residues 552-575 (IVFSVAFWLGYCNSAMNPCVYALF). Over 576–638 (SRDFRFAFRK…TASGGNGGYT (63 aa)) the chain is Cytoplasmic. The disordered stretch occupies residues 618 to 638 (DDAKSSSDIGPTASGGNGGYT).

It belongs to the G-protein coupled receptor 1 family. In terms of tissue distribution, expressed in the central nervous system.

It is found in the cell membrane. In terms of biological role, G-protein coupled receptor for octopamine (OA), which is a neurotransmitter, neurohormone, and neuromodulator in invertebrates. Activation of this receptor by octopamine induces an increase in both inositol phosphates and cyclic AMP. The coupling to adenylyl cyclase seems to be less efficient than the coupling to phospholipase C. The rank order of potency for agonists is p-synephrine &gt;= clonidine &gt; p-octopamine = xylometazoline = phenylephrine = oxymetazoline &gt; B-HT920 &gt; serotonin = p-tyramine &gt; epinephrine &gt; norepinephrine &gt; methoxamine = dopamine = histamine. For antagonists, the rank order is yohimbine &gt; chlopromazine / spiperone &gt; phentolamine &gt; mianserine &gt; rauwolscine &gt; prazosin &gt; alprenolol / propanolol &gt; pindolol. In Lymnaea stagnalis (Great pond snail), this protein is Octopamine receptor 1.